Consider the following 551-residue polypeptide: Chaperonin GroEL (551 aa).

ATP-binding positions include 29-32 (TMGP), Lys-50, 86-90 (DGTTT), Gly-414, 478-480 (NAA), and Asp-494.

The protein belongs to the chaperonin (HSP60) family. As to quaternary structure, forms a cylinder of 14 subunits composed of two heptameric rings stacked back-to-back. Interacts with the co-chaperonin GroES.

It localises to the cytoplasm. The catalysed reaction is ATP + H2O + a folded polypeptide = ADP + phosphate + an unfolded polypeptide.. Its function is as follows. Together with its co-chaperonin GroES, plays an essential role in assisting protein folding. The GroEL-GroES system forms a nano-cage that allows encapsulation of the non-native substrate proteins and provides a physical environment optimized to promote and accelerate protein folding. This is Chaperonin GroEL from Legionella jeonii.